A 97-amino-acid chain; its full sequence is Protein C4 (97 aa).

2 disordered regions span residues 1-31 (MGLL…PHTG) and 75-97 (ANLP…PSIY). Gly-2 carries N-myristoyl glycine; by host lipidation. Residues 77 to 88 (LPTTHMPRQSIQ) show a composition bias toward polar residues.

The protein belongs to the geminiviridae protein AC4/C4 family.

It localises to the host cell membrane. Its function is as follows. Pathogenicity determinant. May act as a suppressor of RNA-mediated gene silencing, also known as post-transcriptional gene silencing (PTGS), a mechanism of plant viral defense that limits the accumulation of viral RNAs. This is Protein C4 from Tomato yellow leaf curl China virus (TYLCCNV).